Reading from the N-terminus, the 274-residue chain is NADPH-dependent 7-cyano-7-deazaguanine reductase (274 aa).

Val-80–Ser-82 is a binding site for substrate. Ser-82–Lys-83 contributes to the NADPH binding site. Residue Cys-181 is the Thioimide intermediate of the active site. The active-site Proton donor is Asp-188. His-220–Glu-221 lines the substrate pocket. Arg-249–Gly-250 serves as a coordination point for NADPH.

The protein belongs to the GTP cyclohydrolase I family. QueF type 2 subfamily. In terms of assembly, homodimer.

The protein resides in the cytoplasm. It catalyses the reaction 7-aminomethyl-7-carbaguanine + 2 NADP(+) = 7-cyano-7-deazaguanine + 2 NADPH + 3 H(+). It functions in the pathway tRNA modification; tRNA-queuosine biosynthesis. Catalyzes the NADPH-dependent reduction of 7-cyano-7-deazaguanine (preQ0) to 7-aminomethyl-7-deazaguanine (preQ1). This Burkholderia pseudomallei (strain 1106a) protein is NADPH-dependent 7-cyano-7-deazaguanine reductase.